A 302-amino-acid chain; its full sequence is 4-hydroxy-tetrahydrodipicolinate synthase (302 aa).

Threonine 55 is a pyruvate binding site. Catalysis depends on tyrosine 144, which acts as the Proton donor/acceptor. Lysine 172 acts as the Schiff-base intermediate with substrate in catalysis. Valine 214 lines the pyruvate pocket.

It belongs to the DapA family. As to quaternary structure, homotetramer; dimer of dimers.

Its subcellular location is the cytoplasm. The catalysed reaction is L-aspartate 4-semialdehyde + pyruvate = (2S,4S)-4-hydroxy-2,3,4,5-tetrahydrodipicolinate + H2O + H(+). Its pathway is amino-acid biosynthesis; L-lysine biosynthesis via DAP pathway; (S)-tetrahydrodipicolinate from L-aspartate: step 3/4. Catalyzes the condensation of (S)-aspartate-beta-semialdehyde [(S)-ASA] and pyruvate to 4-hydroxy-tetrahydrodipicolinate (HTPA). This is 4-hydroxy-tetrahydrodipicolinate synthase from Synechococcus sp. (strain CC9902).